Consider the following 415-residue polypeptide: MNEVLAKGKRAKEVARELVLKSTHQKNEALAAIANQLISETAYILEENKRDIEEGKAKGFSDSLLDRLMLNEQRIVDMTEGIKQLIELRDPVGECVSAWERPNGLSIQEMRVPLGVVGMIYEARPNVTVDAATICLKTGNAVILRGSSSAIHSNKAIVAVIHRALKQTSLPEESVQLIEDTTRDSAKQLFTMNDYLDVLIPRGGKQLIDTVVREASVPVLETGAGNCHIFIDETADKQMAFDIIINAKTQRPSVCNAIETIVLHENWAQQYGSELFSSLKERGVELRGDQKALAMDSSIVLASEEDWGTEFLSLTLAVKIVSSIEEAIHHINTYGSMHSEAIISENEENVSKFFVSVDAAALYHNASTRFTDGSEFGFGAEIGISTQKLHVRGPMGLPALTSTKYIIRGNGQIRK.

The protein belongs to the gamma-glutamyl phosphate reductase family.

It is found in the cytoplasm. It carries out the reaction L-glutamate 5-semialdehyde + phosphate + NADP(+) = L-glutamyl 5-phosphate + NADPH + H(+). It participates in amino-acid biosynthesis; L-proline biosynthesis; L-glutamate 5-semialdehyde from L-glutamate: step 2/2. In terms of biological role, catalyzes the NADPH-dependent reduction of L-glutamate 5-phosphate into L-glutamate 5-semialdehyde and phosphate. The product spontaneously undergoes cyclization to form 1-pyrroline-5-carboxylate. The sequence is that of Gamma-glutamyl phosphate reductase from Bacillus cereus (strain AH187).